We begin with the raw amino-acid sequence, 334 residues long: HTH-type transcriptional repressor PurR (334 aa).

The 55-residue stretch at 2–56 folds into the HTH lacI-type domain; sequence ATIKDVAKMAGVSTTTVSHVINKTRFVAAETEKLVLQAIQELNYSPSAVARSLKV. Positions 4–23 form a DNA-binding region, H-T-H motif; sequence IKDVAKMAGVSTTTVSHVIN. The DNA-binding element occupies 48–56; the sequence is SAVARSLKV. Hypoxanthine contacts are provided by Tyr-73, Lys-189, Thr-191, Phe-220, and Asp-274.

Homodimer.

It participates in purine metabolism; purine nucleotide biosynthesis [regulation]. Its function is as follows. Is the main repressor of the genes involved in the de novo synthesis of purine nucleotides, regulating purB, purC, purEK, purF, purHD, purL, purMN and guaBA expression. PurR is allosterically activated to bind its cognate DNA by binding the purine corepressors, hypoxanthine or guanine, thereby effecting transcription repression. The chain is HTH-type transcriptional repressor PurR from Pasteurella multocida (strain Pm70).